The sequence spans 276 residues: Adenylate kinase (276 aa).

51–56 (GAGKGT) contacts ATP. Residues 71–100 (ATGDMLRSQVAKKTPLGQAAKKIMDAGGLV) form an NMP region. AMP is bound by residues Thr72, Arg77, 98 to 100 (GLV), 127 to 130 (GFPR), and Gln134. An LID region spans residues 168-205 (GRLVHPASGRSYHVKFNPPKKEMTDDITGEPLIQRSDD). ATP is bound by residues Arg169 and 178-179 (SY). AMP is bound by residues Arg202 and Arg213. Residue Gln241 coordinates ATP.

This sequence belongs to the adenylate kinase family. AK2 subfamily. In terms of assembly, monomer.

The protein resides in the cytoplasm. It localises to the cytosol. It is found in the mitochondrion intermembrane space. The enzyme catalyses AMP + ATP = 2 ADP. In terms of biological role, catalyzes the reversible transfer of the terminal phosphate group between ATP and AMP. Plays an important role in cellular energy homeostasis and in adenine nucleotide metabolism. Adenylate kinase activity is critical for regulation of the phosphate utilization and the AMP de novo biosynthesis pathways. In Podospora anserina (strain S / ATCC MYA-4624 / DSM 980 / FGSC 10383) (Pleurage anserina), this protein is Adenylate kinase.